The chain runs to 336 residues: Cytosolic Fe-S cluster assembly factor NBP35 (336 aa).

The segment at 1 to 20 is disordered; sequence MIATQRPFPIPSPVPLAPSS. [4Fe-4S] cluster is bound by residues Cys-35, Cys-49, Cys-52, and Cys-58. An ATP-binding site is contributed by 88–95; it reads GKGGVGKS. Positions 261 and 264 each coordinate [4Fe-4S] cluster.

It belongs to the Mrp/NBP35 ATP-binding proteins family. NUBP1/NBP35 subfamily. As to quaternary structure, heterotetramer of 2 NBP35 and 2 CFD1 chains. It depends on [4Fe-4S] cluster as a cofactor.

The protein localises to the cytoplasm. In terms of biological role, component of the cytosolic iron-sulfur (Fe/S) protein assembly (CIA) machinery. Required for maturation of extramitochondrial Fe-S proteins. The NBP35-CFD1 heterotetramer forms a Fe-S scaffold complex, mediating the de novo assembly of an Fe-S cluster and its transfer to target apoproteins. In Cryptococcus neoformans var. neoformans serotype D (strain B-3501A) (Filobasidiella neoformans), this protein is Cytosolic Fe-S cluster assembly factor NBP35.